The chain runs to 603 residues: UvrABC system protein C (603 aa).

One can recognise a GIY-YIG domain in the interval 17–94 (TTSGCYKMLN…IKTHKPDYNV (78 aa)). In terms of domain architecture, UVR spans 199-234 (SEILSQIDIKLKLAVQKEDFETAIKLKEMKSSLIEI).

It belongs to the UvrC family. Interacts with UvrB in an incision complex.

It is found in the cytoplasm. The UvrABC repair system catalyzes the recognition and processing of DNA lesions. UvrC both incises the 5' and 3' sides of the lesion. The N-terminal half is responsible for the 3' incision and the C-terminal half is responsible for the 5' incision. The chain is UvrABC system protein C from Borrelia garinii subsp. bavariensis (strain ATCC BAA-2496 / DSM 23469 / PBi) (Borreliella bavariensis).